The sequence spans 421 residues: uncharacterized protein (421 aa).

Coiled-coil stretches lie at residues 126 to 182 (YART…IQKI) and 328 to 397 (YQVE…RLTL).

This is an uncharacterized protein from Treponema pallidum (strain Nichols).